The primary structure comprises 199 residues: ATP-dependent Clp protease proteolytic subunit (199 aa).

Ser-97 functions as the Nucleophile in the catalytic mechanism. The active site involves His-122.

This sequence belongs to the peptidase S14 family. In terms of assembly, fourteen ClpP subunits assemble into 2 heptameric rings which stack back to back to give a disk-like structure with a central cavity, resembling the structure of eukaryotic proteasomes.

It is found in the cytoplasm. The enzyme catalyses Hydrolysis of proteins to small peptides in the presence of ATP and magnesium. alpha-casein is the usual test substrate. In the absence of ATP, only oligopeptides shorter than five residues are hydrolyzed (such as succinyl-Leu-Tyr-|-NHMec, and Leu-Tyr-Leu-|-Tyr-Trp, in which cleavage of the -Tyr-|-Leu- and -Tyr-|-Trp bonds also occurs).. Its function is as follows. Cleaves peptides in various proteins in a process that requires ATP hydrolysis. Has a chymotrypsin-like activity. Plays a major role in the degradation of misfolded proteins. This Geobacter sulfurreducens (strain ATCC 51573 / DSM 12127 / PCA) protein is ATP-dependent Clp protease proteolytic subunit.